Here is a 122-residue protein sequence, read N- to C-terminus: Ribosomal protein eL22-like (122 aa).

Residues S112, S118, and S120 each carry the phosphoserine modification.

Belongs to the eukaryotic ribosomal protein eL22 family.

The sequence is that of Ribosomal protein eL22-like (RPL22L1) from Bos taurus (Bovine).